A 661-amino-acid chain; its full sequence is UvrABC system protein B (661 aa).

The 387-residue stretch at 28-414 folds into the Helicase ATP-binding domain; that stretch reads DGVNERKRHQ…HTDEMVEQII (387 aa). An ATP-binding site is contributed by 41–48; the sequence is GATGTGKT. Positions 94–117 match the Beta-hairpin motif; the sequence is YYDYYQPEAYVPSTDTFIEKDASI. A Helicase C-terminal domain is found at 432–598; that stretch reads QIDDLLSEIQ…TINKKIHDVI (167 aa). The disordered stretch occupies residues 603–624; it reads ESDETNQQQQTELPKKMTKKER. In terms of domain architecture, UVR spans 625–660; sequence QKTIENIEKEMKKAAKDLDFEKATELRDMLFELKAE.

Belongs to the UvrB family. As to quaternary structure, forms a heterotetramer with UvrA during the search for lesions. Interacts with UvrC in an incision complex.

It is found in the cytoplasm. Its function is as follows. The UvrABC repair system catalyzes the recognition and processing of DNA lesions. A damage recognition complex composed of 2 UvrA and 2 UvrB subunits scans DNA for abnormalities. Upon binding of the UvrA(2)B(2) complex to a putative damaged site, the DNA wraps around one UvrB monomer. DNA wrap is dependent on ATP binding by UvrB and probably causes local melting of the DNA helix, facilitating insertion of UvrB beta-hairpin between the DNA strands. Then UvrB probes one DNA strand for the presence of a lesion. If a lesion is found the UvrA subunits dissociate and the UvrB-DNA preincision complex is formed. This complex is subsequently bound by UvrC and the second UvrB is released. If no lesion is found, the DNA wraps around the other UvrB subunit that will check the other stand for damage. The polypeptide is UvrABC system protein B (Staphylococcus epidermidis (strain ATCC 12228 / FDA PCI 1200)).